The chain runs to 226 residues: Probable functional amyloid protease FapD (226 aa).

Positions 1–18 (MRRATLCLLLLLAGPSWA) are cleaved as a signal peptide. In terms of domain architecture, Peptidase C39 spans 50 to 180 (QKTDFSCGAA…AGWNGIVFAV (131 aa)). Residue Cys-56 is part of the active site.

It belongs to the FapD family.

The protein resides in the periplasm. Its function is as follows. Probable cysteine protease that is involved in processing fibril precursors. Upon overexpression of the endogenous six-gene locus (fapA-fapF) in situ, cells form large clumps during liquid growth, make large amounts of biofilm and produce amyloid fibrils. Expression of the 6 gene operon in E.coli strain BL21(DE3) induces flocculation and biofilm formation with copious extracellular fibrils. This chain is Probable functional amyloid protease FapD, found in Pseudomonas fluorescens.